Here is a 428-residue protein sequence, read N- to C-terminus: Spermidine/putrescine import ATP-binding protein PotA (428 aa).

The ABC transporter domain maps to 6–238 (IEFKNVSKTY…PINHFVADFI (233 aa)). 40–47 (GASGSGKS) provides a ligand contact to ATP.

This sequence belongs to the ABC transporter superfamily. Spermidine/putrescine importer (TC 3.A.1.11.1) family. The complex is composed of two ATP-binding proteins (PotA), two transmembrane proteins (PotB and PotC) and a solute-binding protein (PotD).

It localises to the cell membrane. The catalysed reaction is ATP + H2O + polyamine-[polyamine-binding protein]Side 1 = ADP + phosphate + polyamineSide 2 + [polyamine-binding protein]Side 1.. In terms of biological role, part of the ABC transporter complex PotABCD involved in spermidine/putrescine import. Responsible for energy coupling to the transport system. The polypeptide is Spermidine/putrescine import ATP-binding protein PotA (Lactococcus lactis subsp. lactis (strain IL1403) (Streptococcus lactis)).